The sequence spans 1887 residues: DNA-directed RNA polymerase II subunit RPB1 (1887 aa).

Residues cysteine 67, cysteine 70, cysteine 77, histidine 80, cysteine 107, cysteine 110, cysteine 150, and cysteine 176 each contribute to the Zn(2+) site. Positions 156 to 178 (MDLTKENQQPDPNKKPGHGGCGH) are disordered. Residues aspartate 487, aspartate 489, and aspartate 491 each contribute to the Mg(2+) site. The tract at residues 825–837 (PSEFYFHAMGGRE) is bridging helix. Lysine 1260 is covalently cross-linked (Glycyl lysine isopeptide (Lys-Gly) (interchain with G-Cter in ubiquitin)). 2 disordered regions span residues 1528 to 1565 (TPGG…GPSM) and 1579 to 1887 (YSPT…ESED). 3 stretches are compositionally biased toward low complexity: residues 1529–1565 (PGGP…GPSM), 1579–1610 (YSPT…PTSP), and 1626–1650 (PQST…PTVQ). Repeat 1 spans residues 1579 to 1585 (YSPTSPN). The interval 1579–1881 (YSPTSPNYTA…SPAYSPSSPT (303 aa)) is C-terminal domain (CTD); 32 X 7 AA approximate tandem repeats of Y-[ST]-P-[STNVAPGN]-[STGMA]-[PSTR]-[SNAGCQKTLRIMH]. One copy of the 2; approximate repeat lies at 1586-1592 (YTASSPG). 4 tandem repeats follow at residues 1598–1604 (YSPSSPN), 1605–1611 (YSPTSPL), 1631–1637 (YSPSSSG), and 1638–1644 (YSPTSPV). Polar residues predominate over residues 1651 to 1664 (FQSSPSFAGSGSNI). A compositionally biased stretch (low complexity) spans 1665–1760 (YSPGNAYSPS…GVKYSPTSPT (96 aa)). A run of 17 repeats spans residues 1671-1677 (YSPSSSN), 1678-1684 (YSPNSPS), 1685-1691 (YSPTSPS), 1692-1698 (YSPSSPS), 1699-1705 (YSPTSPC), 1706-1712 (YSPTSPS), 1713-1719 (YSPTSPN), 1720-1726 (YTPVTPS), 1727-1733 (YSPTSPN), 1740-1746 (YSPASPA), 1754-1760 (YSPTSPT), 1761-1767 (YSPPSPS), 1777-1783 (YTPGSPQ), 1784-1790 (YSPASPK), 1791-1797 (YSPTSPL), 1798-1804 (YSPSSPQ), and 1811-1817 (YSPTGST). Residues 1776–1786 (QYTPGSPQYSP) are compositionally biased toward polar residues. Positions 1788–1813 (SPKYSPTSPLYSPSSPQHSPSNQYSP) are enriched in low complexity. A compositionally biased stretch (polar residues) spans 1814 to 1831 (TGSTYSATSPRYSPNMSI). Residues 1818 to 1824 (YSATSPR) form a 24; approximate repeat. 8 consecutive repeat copies span residues 1825–1831 (YSPNMSI), 1832–1838 (YSPSSTK), 1839–1845 (YSPTSPT), 1846–1852 (YTPTARN), 1853–1859 (YSPTSPM), 1860–1866 (YSPTAPS), 1868–1874 (YSPTSPA), and 1875–1881 (YSPSSPT). Over residues 1832–1849 (YSPSSTKYSPTSPTYTPT) the composition is skewed to low complexity. The segment covering 1850–1859 (ARNYSPTSPM) has biased composition (polar residues). Residues 1860 to 1881 (YSPTAPSHYSPTSPAYSPSSPT) show a composition bias toward low complexity.

The protein belongs to the RNA polymerase beta' chain family. As to quaternary structure, component of the RNA polymerase II (Pol II) complex consisting of 12 subunits. The tandem 7 residues repeats in the C-terminal domain (CTD) can be highly phosphorylated. The phosphorylation activates Pol II. Phosphorylation occurs mainly at residues 'Ser-2' and 'Ser-5' of the heptapeptide repeat. The phosphorylation state is believed to result from the balanced action of site-specific CTD kinases and phosphatase, and a 'CTD code' that specifies the position of Pol II within the transcription cycle has been proposed. Post-translationally, following transcription stress, the elongating form of RNA polymerase II (RNA pol IIo) is polyubiquitinated via 'Lys-63'-linkages on Lys-1260 at DNA damage sites without leading to degradation: ubiquitination promotes RNA pol IIo backtracking to allow access by the transcription-coupled nucleotide excision repair (TC-NER) machinery. Subsequent DEF1-dependent polyubiquitination by the elongin complex via 'Lys-48'-linkages may lead to proteasome-mediated degradation; presumably at stalled RNA pol II where TC-NER has failed, to halt global transcription and enable 'last resort' DNA repair pathways.

Its subcellular location is the nucleus. The enzyme catalyses RNA(n) + a ribonucleoside 5'-triphosphate = RNA(n+1) + diphosphate. Functionally, DNA-dependent RNA polymerase catalyzes the transcription of DNA into RNA using the four ribonucleoside triphosphates as substrates. Largest and catalytic component of RNA polymerase II which synthesizes mRNA precursors and many functional non-coding RNAs. Forms the polymerase active center together with the second largest subunit. Pol II is the central component of the basal RNA polymerase II transcription machinery. It is composed of mobile elements that move relative to each other. RPB1 is part of the core element with the central large cleft, the clamp element that moves to open and close the cleft and the jaws that are thought to grab the incoming DNA template. At the start of transcription, a single-stranded DNA template strand of the promoter is positioned within the central active site cleft of Pol II. A bridging helix emanates from RPB1 and crosses the cleft near the catalytic site and is thought to promote translocation of Pol II by acting as a ratchet that moves the RNA-DNA hybrid through the active site by switching from straight to bent conformations at each step of nucleotide addition. During transcription elongation, Pol II moves on the template as the transcript elongates. Elongation is influenced by the phosphorylation status of the C-terminal domain (CTD) of Pol II largest subunit (RPB1), which serves as a platform for assembly of factors that regulate transcription initiation, elongation, termination and mRNA processing. This is DNA-directed RNA polymerase II subunit RPB1 from Drosophila melanogaster (Fruit fly).